We begin with the raw amino-acid sequence, 968 residues long: RNA polymerase-associated protein RapA (968 aa).

Residues 164–334 (DVGRRHAPRV…FARLRLLDPN (171 aa)) form the Helicase ATP-binding domain. ATP is bound at residue 177–184 (DEVGLGKT). The DEAH box signature appears at 280 to 283 (DEAH). A Helicase C-terminal domain is found at 490–644 (RVEWLMGYLT…TCPTGRTVYD (155 aa)).

It belongs to the SNF2/RAD54 helicase family. RapA subfamily. In terms of assembly, interacts with the RNAP. Has a higher affinity for the core RNAP than for the holoenzyme. Its ATPase activity is stimulated by binding to RNAP.

Its function is as follows. Transcription regulator that activates transcription by stimulating RNA polymerase (RNAP) recycling in case of stress conditions such as supercoiled DNA or high salt concentrations. Probably acts by releasing the RNAP, when it is trapped or immobilized on tightly supercoiled DNA. Does not activate transcription on linear DNA. Probably not involved in DNA repair. This chain is RNA polymerase-associated protein RapA, found in Klebsiella pneumoniae subsp. pneumoniae (strain ATCC 700721 / MGH 78578).